The primary structure comprises 339 residues: Dihydroorotate dehydrogenase (quinone) (339 aa).

FMN-binding positions include 62 to 66 (AGLDK) and T86. K66 is a substrate binding site. 111-115 (NRMGF) is a binding site for substrate. Residues N139 and N172 each contribute to the FMN site. Residue N172 participates in substrate binding. Residue S175 is the Nucleophile of the active site. Substrate is bound at residue N177. Residues K217 and T245 each contribute to the FMN site. 246–247 (NT) contributes to the substrate binding site. Residues G268, G297, and 318–319 (YS) contribute to the FMN site.

This sequence belongs to the dihydroorotate dehydrogenase family. Type 2 subfamily. As to quaternary structure, monomer. FMN serves as cofactor.

The protein resides in the cell membrane. It carries out the reaction (S)-dihydroorotate + a quinone = orotate + a quinol. It functions in the pathway pyrimidine metabolism; UMP biosynthesis via de novo pathway; orotate from (S)-dihydroorotate (quinone route): step 1/1. Catalyzes the conversion of dihydroorotate to orotate with quinone as electron acceptor. This is Dihydroorotate dehydrogenase (quinone) from Shewanella frigidimarina (strain NCIMB 400).